A 123-amino-acid polypeptide reads, in one-letter code: NADH-quinone oxidoreductase subunit A (123 aa).

3 helical membrane-spanning segments follow: residues 11 to 31 (YLPI…IMIL), 68 to 88 (LVAI…PWAI), and 93 to 113 (IGKM…IGFI).

Belongs to the complex I subunit 3 family. NDH-1 is composed of 14 different subunits. Subunits NuoA, H, J, K, L, M, N constitute the membrane sector of the complex.

The protein localises to the cell inner membrane. It catalyses the reaction a quinone + NADH + 5 H(+)(in) = a quinol + NAD(+) + 4 H(+)(out). In terms of biological role, NDH-1 shuttles electrons from NADH, via FMN and iron-sulfur (Fe-S) centers, to quinones in the respiratory chain. The immediate electron acceptor for the enzyme in this species is believed to be ubiquinone. Couples the redox reaction to proton translocation (for every two electrons transferred, four hydrogen ions are translocated across the cytoplasmic membrane), and thus conserves the redox energy in a proton gradient. This chain is NADH-quinone oxidoreductase subunit A, found in Rickettsia prowazekii (strain Madrid E).